The primary structure comprises 311 residues: Putative F-box protein At1g31090 (311 aa).

Positions 4–53 (GANSDSIPTDLIYEILSRLSVKPITRFRCVSKLWESIICRQDFTELFHNR) constitute an F-box domain. The interval 287–311 (RPAEQNTSTSSREDHLVRTVKRKRA) is disordered.

This Arabidopsis thaliana (Mouse-ear cress) protein is Putative F-box protein At1g31090.